A 129-amino-acid chain; its full sequence is SPbeta prophage-derived protein NrdI (129 aa).

The protein belongs to the NrdI family.

Functionally, probably involved in ribonucleotide reductase function. The protein is SPbeta prophage-derived protein NrdI (nrdIB) of Bacillus subtilis (strain 168).